The sequence spans 448 residues: Probable malate:quinone oxidoreductase (448 aa).

Belongs to the MQO family. The cofactor is FAD.

The enzyme catalyses (S)-malate + a quinone = a quinol + oxaloacetate. The protein operates within carbohydrate metabolism; tricarboxylic acid cycle; oxaloacetate from (S)-malate (quinone route): step 1/1. Functionally, catalyzes oxidation of malate to oxaloacetate in the citric acid cycle. Donates electrons to quinones of the electron transfer chain. The protein is Probable malate:quinone oxidoreductase (mqo) of Campylobacter jejuni subsp. jejuni serotype O:2 (strain ATCC 700819 / NCTC 11168).